The primary structure comprises 262 residues: Bacteriorhodopsin (262 aa).

Positions 1 to 13 (MLELLPTAVEGVS) are excised as a propeptide. Gln-14 is subject to Pyrrolidone carboxylic acid. The Extracellular segment spans residues 14 to 22 (QAQITGRPE). A helical membrane pass occupies residues 23–42 (WIWLALGTALMGLGTLYFLV). Topologically, residues 43–56 (KGMGVSDPDAKKFY) are cytoplasmic. Residues 57 to 75 (AITTLVPAIAFTMYLSMLL) form a helical membrane-spanning segment. The Extracellular portion of the chain corresponds to 76-92 (GYGLTMVPFGGEQNPIY). A helical transmembrane segment spans residues 93-109 (WARYADWLFTTPLLLLD). The Cytoplasmic segment spans residues 110–120 (LALLVDADQGT). Residues 121–140 (ILALVGADGIMIGTGLVGAL) form a helical membrane-spanning segment. At 141–147 (TKVYSYR) the chain is on the extracellular side. A helical transmembrane segment spans residues 148–167 (FVWWAISTAAMLYILYVLFF). Topologically, residues 168–185 (GFTSKAESMRPEVASTFK) are cytoplasmic. Residues 186 to 204 (VLRNVTVVLWSAYPVVWLI) form a helical membrane-spanning segment. Topologically, residues 205-216 (GSEGAGIVPLNI) are extracellular. The chain crosses the membrane as a helical span at residues 217 to 236 (ETLLFMVLDVSAKVGFGLIL). The residue at position 229 (Lys-229) is an N6-(retinylidene)lysine. The Cytoplasmic portion of the chain corresponds to 237-262 (LRSRAIFGEAEAPEPSAGDGAAATSD).

In terms of assembly, homotrimer. In terms of processing, the covalent binding of retinal to the apoprotein, bacterioopsin, generates bacteriorhodopsin.

The protein resides in the cell membrane. Light-driven proton pump. This chain is Bacteriorhodopsin (bop), found in Halobacterium salinarum (strain ATCC 700922 / JCM 11081 / NRC-1) (Halobacterium halobium).